Here is a 59-residue protein sequence, read N- to C-terminus: UPF0434 protein Rsph17029_0141 (59 aa).

It belongs to the UPF0434 family.

This Cereibacter sphaeroides (strain ATCC 17029 / ATH 2.4.9) (Rhodobacter sphaeroides) protein is UPF0434 protein Rsph17029_0141.